Reading from the N-terminus, the 701-residue chain is MAQKDVLTDLTKVRNIGIMAHIDAGKTTTTERILYYTGISYKIGEVHDGAATMDWMEQEQERGITITSAATTCFWNDNQINIIDTPGHVDFTVEVERSLRVLDGAVAVFDGKEGVEPQSEQVWRQADKYEVPRICFVNKMDKIGADFYFSVRTMQERLGANVIPIQLPVGSEGDFEGVVDLVEMKAKVWSTEAKLGEKYDVVGIPTDLQEKAEEYRTNLLETVAETDEALLEKYFSGEELTVAEIKGAIRKLTISSEAYPVLCGSAFKNKGVQPMLDAVIDYLPSPLDVPAAIGHVPGKEDEEIVRKPSTDEPLSALAFKVATHPFFGKLTYVRVYSGKVDSGSQVINATKGKKERLGKLFQMHSNKENPVETASAGHIYAVIGLKDTTTGDTLADPNNQIVLESMTFPDPVIEVAIEPKTKSDQEKLSLSIQKLAEEDPTFKVHLDSETGQTVIGGMGELHLDILVDRMRREFKVEANVGKPQVAYKETIRRVVETVEYTHKKQTGGSGQFAKVIIKLEPFSGENGATYEFENKVTGGRIPREYIPSVEAGARDAMQYGVLAGYPLVNLKVTLLDGAYHDVDSSEIAFKIAGSQVLKKAAAQAQPVILEPIMAVEVTTPEDYMGDVIGDLHSRRGQIQAMKERAGTRVVRAHVPLSEMFGYVGDLRSKTQGRANYSMVFNSYSEVPANVSKEIIAKATGE.

Residues 11 to 287 (TKVRNIGIMA…AVIDYLPSPL (277 aa)) enclose the tr-type G domain. GTP is bound by residues 20-27 (AHIDAGKT), 84-88 (DTPGH), and 138-141 (NKMD).

It belongs to the TRAFAC class translation factor GTPase superfamily. Classic translation factor GTPase family. EF-G/EF-2 subfamily.

The protein localises to the cytoplasm. Its function is as follows. Catalyzes the GTP-dependent ribosomal translocation step during translation elongation. During this step, the ribosome changes from the pre-translocational (PRE) to the post-translocational (POST) state as the newly formed A-site-bound peptidyl-tRNA and P-site-bound deacylated tRNA move to the P and E sites, respectively. Catalyzes the coordinated movement of the two tRNA molecules, the mRNA and conformational changes in the ribosome. The chain is Elongation factor G from Mycobacterium leprae (strain Br4923).